We begin with the raw amino-acid sequence, 297 residues long: Acetyl-coenzyme A carboxylase carboxyl transferase subunit beta (297 aa).

Positions 27 to 296 (LWHKCPACEA…PEQAREAAAV (270 aa)) constitute a CoA carboxyltransferase N-terminal domain. Cys-31, Cys-34, Cys-50, and Cys-53 together coordinate Zn(2+). Residues 31-53 (CPACEAVLYRPELEKTLDVCPKC) form a C4-type zinc finger.

This sequence belongs to the AccD/PCCB family. Acetyl-CoA carboxylase is a heterohexamer composed of biotin carboxyl carrier protein (AccB), biotin carboxylase (AccC) and two subunits each of ACCase subunit alpha (AccA) and ACCase subunit beta (AccD). Zn(2+) serves as cofactor.

It localises to the cytoplasm. It catalyses the reaction N(6)-carboxybiotinyl-L-lysyl-[protein] + acetyl-CoA = N(6)-biotinyl-L-lysyl-[protein] + malonyl-CoA. It functions in the pathway lipid metabolism; malonyl-CoA biosynthesis; malonyl-CoA from acetyl-CoA: step 1/1. In terms of biological role, component of the acetyl coenzyme A carboxylase (ACC) complex. Biotin carboxylase (BC) catalyzes the carboxylation of biotin on its carrier protein (BCCP) and then the CO(2) group is transferred by the transcarboxylase to acetyl-CoA to form malonyl-CoA. This is Acetyl-coenzyme A carboxylase carboxyl transferase subunit beta from Pseudomonas putida (strain W619).